Consider the following 546-residue polypeptide: Branchpoint-bridging protein (546 aa).

2 disordered regions span residues 1–141 (MWRP…ASAK) and 178–199 (TGDV…YDAY). Residues 50–128 (RQERERDARD…DRGDSNEDGP (79 aa)) are compositionally biased toward basic and acidic residues. Residues 251–330 (YIPVKEFPEI…SKVKTCVALI (80 aa)) form the KH domain. 2 CCHC-type zinc fingers span residues 368–385 (QLCQ…ECPQ) and 393–410 (VICR…DCRG).

The protein belongs to the BBP/SF1 family.

The protein localises to the nucleus. Necessary for the splicing of pre-mRNA. Has a role in the recognition of the branch site (5'-UACUAAC-3'), the pyrimidine tract and the 3'-splice site at the 3'-end of introns. The polypeptide is Branchpoint-bridging protein (BBP) (Cryptococcus neoformans var. neoformans serotype D (strain B-3501A) (Filobasidiella neoformans)).